The following is a 51-amino-acid chain: Large ribosomal subunit protein eL39 (51 aa).

It belongs to the eukaryotic ribosomal protein eL39 family.

This is Large ribosomal subunit protein eL39 from Hyperthermus butylicus (strain DSM 5456 / JCM 9403 / PLM1-5).